Here is a 441-residue protein sequence, read N- to C-terminus: Membrane protein PB1A10.07c (441 aa).

The next 11 helical transmembrane spans lie at 1–21, 41–61, 97–117, 128–148, 158–178, 206–226, 235–255, 263–283, 307–327, 364–384, and 415–435; these read MGAVLSIPLALASSLSGVVGI, VGAVISYAVLYFVNSLLSWCM, LSFTLVMFHLFLAFILSLCNT, GLWPFKIVLWFVLGIFSFFIP, IISVMGSALFIVYGLMLLVDF, TVGMYVVGLVLTILTYVFFCA, INTINLLLCIAVSCLSVHPTI, GLAQSSMVMCYTCYLILSALA, VIGAAFTFFTILYSAVRAASS, YNFIWFHIVFVLAAFYTASLL, and IITSWVCHGLYVWSCLAPVFF.

It belongs to the TDE1 family.

The protein resides in the membrane. The protein is Membrane protein PB1A10.07c of Schizosaccharomyces pombe (strain 972 / ATCC 24843) (Fission yeast).